We begin with the raw amino-acid sequence, 128 residues long: Large ribosomal subunit protein bL17 (128 aa).

The protein belongs to the bacterial ribosomal protein bL17 family. As to quaternary structure, part of the 50S ribosomal subunit. Contacts protein L32.

This is Large ribosomal subunit protein bL17 from Streptococcus pyogenes serotype M49 (strain NZ131).